The chain runs to 568 residues: Urease subunit alpha (568 aa).

The Urease domain maps to 130 to 568; it reads GGIDTHIHFI…LPMAQRYFLF (439 aa). His-135, His-137, and Lys-218 together coordinate Ni(2+). At Lys-218 the chain carries N6-carboxylysine. His-220 serves as a coordination point for substrate. The Ni(2+) site is built by His-247 and His-273. His-321 serves as the catalytic Proton donor. Asp-361 is a binding site for Ni(2+).

The protein belongs to the metallo-dependent hydrolases superfamily. Urease alpha subunit family. Heterotrimer of UreA (gamma), UreB (beta) and UreC (alpha) subunits. Three heterotrimers associate to form the active enzyme. It depends on Ni cation as a cofactor. In terms of processing, carboxylation allows a single lysine to coordinate two nickel ions.

The protein localises to the cytoplasm. It catalyses the reaction urea + 2 H2O + H(+) = hydrogencarbonate + 2 NH4(+). It functions in the pathway nitrogen metabolism; urea degradation; CO(2) and NH(3) from urea (urease route): step 1/1. The sequence is that of Urease subunit alpha from Burkholderia orbicola (strain MC0-3).